The sequence spans 632 residues: Sporulenol synthase (632 aa).

D377 (proton donor) is an active-site residue. 3 PFTB repeats span residues 395-436 (WERG…EDAA), 465-505 (IQRA…HACG), and 513-554 (IQKA…VQTA).

It belongs to the terpene cyclase/mutase family.

It is found in the cell membrane. It carries out the reaction sporulenol = (R)-tetraprenyl-beta-curcumene + H2O. The protein operates within secondary metabolite biosynthesis; hopanoid biosynthesis. Catalyzes the cyclization of tetraprenyl beta-curcumene into sporulenol. This chain is Sporulenol synthase (sqhC), found in Bacillus subtilis (strain 168).